Here is a 391-residue protein sequence, read N- to C-terminus: Processive diacylglycerol beta-glucosyltransferase (391 aa).

The protein belongs to the glycosyltransferase 28 family. UgtP subfamily.

It localises to the cell membrane. It carries out the reaction a 1,2-diacyl-3-O-(beta-D-glucopyranosyl)-sn-glycerol + UDP-alpha-D-glucose = a 1,2-diacyl-3-O-(beta-D-Glc-(1-&gt;6)-beta-D-Glc)-sn-glycerol + UDP + H(+). The enzyme catalyses a 1,2-diacyl-sn-glycerol + UDP-alpha-D-glucose = a 1,2-diacyl-3-O-(beta-D-glucopyranosyl)-sn-glycerol + UDP + H(+). Its pathway is glycolipid metabolism; diglucosyl-diacylglycerol biosynthesis. Its function is as follows. Processive glucosyltransferase involved in the biosynthesis of both the bilayer- and non-bilayer-forming membrane glucolipids. Is able to successively transfer two glucosyl residues to diacylglycerol (DAG), thereby catalyzing the formation of beta-monoglucosyl-DAG (3-O-(beta-D-glucopyranosyl)-1,2-diacyl-sn-glycerol) and beta-diglucosyl-DAG (3-O-(beta-D-glucopyranosyl-beta-(1-&gt;6)-D-glucopyranosyl)-1,2-diacyl-sn-glycerol). Beta-diglucosyl-DAG is the predominant glycolipid found in Bacillales and is also used as a membrane anchor for lipoteichoic acid (LTA). This Staphylococcus aureus (strain Mu3 / ATCC 700698) protein is Processive diacylglycerol beta-glucosyltransferase.